Reading from the N-terminus, the 206-residue chain is Thiamine-phosphate synthase (206 aa).

Residues 37–41 (QYRNK) and Asn69 each bind 4-amino-2-methyl-5-(diphosphooxymethyl)pyrimidine. Positions 70 and 89 each coordinate Mg(2+). Residue Ser108 participates in 4-amino-2-methyl-5-(diphosphooxymethyl)pyrimidine binding. 135 to 137 (SST) lines the 2-[(2R,5Z)-2-carboxy-4-methylthiazol-5(2H)-ylidene]ethyl phosphate pocket. Lys138 contributes to the 4-amino-2-methyl-5-(diphosphooxymethyl)pyrimidine binding site. Residues Gly165 and 185–186 (IS) each bind 2-[(2R,5Z)-2-carboxy-4-methylthiazol-5(2H)-ylidene]ethyl phosphate.

The protein belongs to the thiamine-phosphate synthase family. Requires Mg(2+) as cofactor.

The enzyme catalyses 2-[(2R,5Z)-2-carboxy-4-methylthiazol-5(2H)-ylidene]ethyl phosphate + 4-amino-2-methyl-5-(diphosphooxymethyl)pyrimidine + 2 H(+) = thiamine phosphate + CO2 + diphosphate. The catalysed reaction is 2-(2-carboxy-4-methylthiazol-5-yl)ethyl phosphate + 4-amino-2-methyl-5-(diphosphooxymethyl)pyrimidine + 2 H(+) = thiamine phosphate + CO2 + diphosphate. It catalyses the reaction 4-methyl-5-(2-phosphooxyethyl)-thiazole + 4-amino-2-methyl-5-(diphosphooxymethyl)pyrimidine + H(+) = thiamine phosphate + diphosphate. It functions in the pathway cofactor biosynthesis; thiamine diphosphate biosynthesis; thiamine phosphate from 4-amino-2-methyl-5-diphosphomethylpyrimidine and 4-methyl-5-(2-phosphoethyl)-thiazole: step 1/1. Its function is as follows. Condenses 4-methyl-5-(beta-hydroxyethyl)thiazole monophosphate (THZ-P) and 2-methyl-4-amino-5-hydroxymethyl pyrimidine pyrophosphate (HMP-PP) to form thiamine monophosphate (TMP). This is Thiamine-phosphate synthase from Azoarcus sp. (strain BH72).